We begin with the raw amino-acid sequence, 185 residues long: Elongation factor P (185 aa).

The protein belongs to the elongation factor P family.

The protein localises to the cytoplasm. It participates in protein biosynthesis; polypeptide chain elongation. Involved in peptide bond synthesis. Stimulates efficient translation and peptide-bond synthesis on native or reconstituted 70S ribosomes in vitro. Probably functions indirectly by altering the affinity of the ribosome for aminoacyl-tRNA, thus increasing their reactivity as acceptors for peptidyl transferase. The polypeptide is Elongation factor P (Lactococcus lactis subsp. cremoris (strain MG1363)).